The following is a 380-amino-acid chain: tRNA-specific 2-thiouridylase MnmA (380 aa).

Residues 26–33 and L52 each bind ATP; that span reads AMSGGVDS. C120 acts as the Nucleophile in catalysis. C120 and C217 are oxidised to a cystine. ATP is bound at residue G144. Residues 166 to 168 are interaction with tRNA; the sequence is RDQ. The active-site Cysteine persulfide intermediate is the C217.

It belongs to the MnmA/TRMU family.

The protein localises to the cytoplasm. The catalysed reaction is S-sulfanyl-L-cysteinyl-[protein] + uridine(34) in tRNA + AH2 + ATP = 2-thiouridine(34) in tRNA + L-cysteinyl-[protein] + A + AMP + diphosphate + H(+). Its function is as follows. Catalyzes the 2-thiolation of uridine at the wobble position (U34) of tRNA, leading to the formation of s(2)U34. The polypeptide is tRNA-specific 2-thiouridylase MnmA (Roseobacter denitrificans (strain ATCC 33942 / OCh 114) (Erythrobacter sp. (strain OCh 114))).